A 198-amino-acid chain; its full sequence is Small ribosomal subunit protein uS4z (198 aa).

Ser68 carries the post-translational modification Phosphoserine. Residues 109–180 (RRLQTIVFKS…PGRVKRRNEK (72 aa)) enclose the S4 RNA-binding domain. Residues 163–198 (TSPFGGGRPGRVKRRNEKSASKKASGGGDADGDDEE) form a disordered region.

Belongs to the universal ribosomal protein uS4 family. As to quaternary structure, binds to the translation initiation factors TIF3E1.

This Arabidopsis thaliana (Mouse-ear cress) protein is Small ribosomal subunit protein uS4z (RPS9B).